Consider the following 369-residue polypeptide: Small ribosomal subunit biogenesis GTPase RsgA (369 aa).

Positions arginine 88–proline 246 constitute a CP-type G domain. Residues asparagine 137–aspartate 140 and glycine 188–serine 196 each bind GTP. 4 residues coordinate Zn(2+): cysteine 271, cysteine 276, histidine 278, and cysteine 284. The tract at residues glutamine 307–glutamate 369 is disordered. Residues threonine 359–glutamate 369 show a composition bias toward acidic residues.

This sequence belongs to the TRAFAC class YlqF/YawG GTPase family. RsgA subfamily. In terms of assembly, monomer. Associates with 30S ribosomal subunit, binds 16S rRNA. The cofactor is Zn(2+).

The protein resides in the cytoplasm. Functionally, one of several proteins that assist in the late maturation steps of the functional core of the 30S ribosomal subunit. Helps release RbfA from mature subunits. May play a role in the assembly of ribosomal proteins into the subunit. Circularly permuted GTPase that catalyzes slow GTP hydrolysis, GTPase activity is stimulated by the 30S ribosomal subunit. The chain is Small ribosomal subunit biogenesis GTPase RsgA from Synechocystis sp. (strain ATCC 27184 / PCC 6803 / Kazusa).